A 651-amino-acid polypeptide reads, in one-letter code: PTS system N-acetylglucosamine-specific EIICBA component (651 aa).

Positions 1-371 (MNILGFFQRL…FNLKTPGRED (371 aa)) constitute a PTS EIIC type-1 domain. The next 12 membrane-spanning stretches (helical) occupy residues 16–36 (LPIA…PDLL), 40–60 (FIAQ…AIGV), 70–90 (GSAA…MVTI), 92–112 (PEIN…GAVY), 132–152 (FVPI…GYVW), 165–185 (WIVS…RLLI), 192–212 (VLNT…GTVF), 232–252 (GFFP…YLAA), 264–284 (LLSV…EFLF), 285–305 (LFLA…SLFI), 308–328 (ALGI…VLMY), and 339–359 (MLLV…SAVI). The region spanning 390-472 (TQLATSYIAA…KKVVTRGPVA (83 aa)) is the PTS EIIB type-1 domain. Catalysis depends on cysteine 412, which acts as the Phosphocysteine intermediate; for EIIB activity. Residue cysteine 412 is modified to Phosphocysteine; by EIIA. Residues 519–623 (DEAFASKAVG…SMISPVVCSN (105 aa)) enclose the PTS EIIA type-1 domain. Positions 556 and 571 each coordinate Zn(2+). Residue histidine 571 is the Tele-phosphohistidine intermediate; for EIIA activity of the active site. Histidine 571 carries the post-translational modification Phosphohistidine; by HPr.

Zn(2+) serves as cofactor.

Its subcellular location is the cell inner membrane. It carries out the reaction N(pros)-phospho-L-histidyl-[protein] + N-acetyl-D-glucosamine(out) = N-acetyl-D-glucosamine 6-phosphate(in) + L-histidyl-[protein]. The phosphoenolpyruvate-dependent sugar phosphotransferase system (sugar PTS), a major carbohydrate active transport system, catalyzes the phosphorylation of incoming sugar substrates concomitantly with their translocation across the cell membrane. This system is involved in N-acetylglucosamine transport. The sequence is that of PTS system N-acetylglucosamine-specific EIICBA component (nagE) from Klebsiella pneumoniae.